The following is a 557-amino-acid chain: Formate--tetrahydrofolate ligase (557 aa).

67–74 (TPAGEGKS) is a binding site for ATP.

Belongs to the formate--tetrahydrofolate ligase family.

It carries out the reaction (6S)-5,6,7,8-tetrahydrofolate + formate + ATP = (6R)-10-formyltetrahydrofolate + ADP + phosphate. It functions in the pathway one-carbon metabolism; tetrahydrofolate interconversion. The polypeptide is Formate--tetrahydrofolate ligase (Latilactobacillus sakei subsp. sakei (strain 23K) (Lactobacillus sakei subsp. sakei)).